Consider the following 141-residue polypeptide: Small ribosomal subunit protein uS12 (141 aa).

A 3-methylthioaspartic acid modification is found at Asp-102. The disordered stretch occupies residues 115–141 (GDASGVEKRRQQRSLYGAKRPKKEASK).

This sequence belongs to the universal ribosomal protein uS12 family. In terms of assembly, part of the 30S ribosomal subunit. Contacts proteins S8 and S17. May interact with IF1 in the 30S initiation complex.

With S4 and S5 plays an important role in translational accuracy. In terms of biological role, interacts with and stabilizes bases of the 16S rRNA that are involved in tRNA selection in the A site and with the mRNA backbone. Located at the interface of the 30S and 50S subunits, it traverses the body of the 30S subunit contacting proteins on the other side and probably holding the rRNA structure together. The combined cluster of proteins S8, S12 and S17 appears to hold together the shoulder and platform of the 30S subunit. The polypeptide is Small ribosomal subunit protein uS12 (Ureaplasma parvum serovar 3 (strain ATCC 27815 / 27 / NCTC 11736)).